The chain runs to 188 residues: dCTP deaminase (188 aa).

109-114 (KSTYAR) contacts dCTP. E135 functions as the Proton donor/acceptor in the catalytic mechanism. DCTP is bound by residues Q154, Y168, and Q178.

Belongs to the dCTP deaminase family. In terms of assembly, homotrimer.

The catalysed reaction is dCTP + H2O + H(+) = dUTP + NH4(+). Its pathway is pyrimidine metabolism; dUMP biosynthesis; dUMP from dCTP (dUTP route): step 1/2. Its function is as follows. Catalyzes the deamination of dCTP to dUTP. The chain is dCTP deaminase from Helicobacter hepaticus (strain ATCC 51449 / 3B1).